We begin with the raw amino-acid sequence, 297 residues long: Protoheme IX farnesyltransferase 1 (297 aa).

The next 9 membrane-spanning stretches (helical) occupy residues Val23–Val43, Trp45–Val65, Leu93–Phe113, Leu117–Leu137, Ile145–Gly165, Pro171–Ile191, Leu216–His236, Leu241–Tyr261, and Ile277–Leu297.

This sequence belongs to the UbiA prenyltransferase family. Protoheme IX farnesyltransferase subfamily.

It localises to the cell inner membrane. It catalyses the reaction heme b + (2E,6E)-farnesyl diphosphate + H2O = Fe(II)-heme o + diphosphate. Its pathway is porphyrin-containing compound metabolism; heme O biosynthesis; heme O from protoheme: step 1/1. In terms of biological role, converts heme B (protoheme IX) to heme O by substitution of the vinyl group on carbon 2 of heme B porphyrin ring with a hydroxyethyl farnesyl side group. In Pseudomonas putida (strain W619), this protein is Protoheme IX farnesyltransferase 1.